The chain runs to 176 residues: ATP-dependent protease subunit HslV (176 aa).

The active site involves Thr4. Residues Ala159, Cys162, and Thr165 each contribute to the Na(+) site.

The protein belongs to the peptidase T1B family. HslV subfamily. As to quaternary structure, a double ring-shaped homohexamer of HslV is capped on each side by a ring-shaped HslU homohexamer. The assembly of the HslU/HslV complex is dependent on binding of ATP.

The protein resides in the cytoplasm. It catalyses the reaction ATP-dependent cleavage of peptide bonds with broad specificity.. Allosterically activated by HslU binding. Functionally, protease subunit of a proteasome-like degradation complex believed to be a general protein degrading machinery. This Wolbachia sp. subsp. Brugia malayi (strain TRS) protein is ATP-dependent protease subunit HslV.